The primary structure comprises 138 residues: Cysteine desulfuration protein SufE (138 aa).

Catalysis depends on Cys51, which acts as the Cysteine persulfide intermediate.

This sequence belongs to the SufE family. In terms of assembly, homodimer. Interacts with SufS.

It localises to the cytoplasm. Its pathway is cofactor biosynthesis; iron-sulfur cluster biosynthesis. In terms of biological role, participates in cysteine desulfuration mediated by SufS. Cysteine desulfuration mobilizes sulfur from L-cysteine to yield L-alanine and constitutes an essential step in sulfur metabolism for biosynthesis of a variety of sulfur-containing biomolecules. Functions as a sulfur acceptor for SufS, by mediating the direct transfer of the sulfur atom from the S-sulfanylcysteine of SufS, an intermediate product of cysteine desulfuration process. This Escherichia coli O45:K1 (strain S88 / ExPEC) protein is Cysteine desulfuration protein SufE.